Reading from the N-terminus, the 334-residue chain is Dipeptide transport ATP-binding protein DppF (334 aa).

Residues 13 to 262 (LQAIDLKKHY…PRHPYTQALL (250 aa)) enclose the ABC transporter domain. 55–62 (GESGCGKS) serves as a coordination point for ATP.

This sequence belongs to the ABC transporter superfamily. As to quaternary structure, the complex is composed of two ATP-binding proteins (DppD and DppF), two transmembrane proteins (DppB and DppC) and a solute-binding protein (DppA). MppA can replace DppA as binding protein for heme and ALA transport.

Its subcellular location is the cell inner membrane. It catalyses the reaction a dipeptide(out) + ATP + H2O = a dipeptide(in) + ADP + phosphate + H(+). Functionally, part of the ABC transporter DppABCDF involved in dipeptide transport. Responsible for energy coupling to the transport system. When a foreign outer membrane heme receptor is expressed in E.coli, DppABCDF can also transport heme and its precursor, 5-aminolevulinic acid (ALA), from the periplasm into the cytoplasm. The sequence is that of Dipeptide transport ATP-binding protein DppF (dppF) from Escherichia coli (strain K12).